A 280-amino-acid polypeptide reads, in one-letter code: Myb family transcription factor PHL11 (280 aa).

In terms of domain architecture, HTH myb-type spans 20-80; that stretch reads RDPKPRLRWT…HLQKYRLGQQ (61 aa). Residues 51 to 76 constitute a DNA-binding region (H-T-H motif); that stretch reads PKSVLKLMGLKGLTLYHLKSHLQKYR. Residues 77-98 are disordered; it reads LGQQQGKKQNRTEQNKENAGSS. Residues 129–149 are coiled coil; sequence AEAMRHQVDAQQRFQEQLEVQ. The LHEQLE signature appears at 142-147; the sequence is FQEQLE.

This sequence belongs to the MYB-CC family.

The protein localises to the nucleus. This is Myb family transcription factor PHL11 from Arabidopsis thaliana (Mouse-ear cress).